A 64-amino-acid polypeptide reads, in one-letter code: Ferredoxin-2 (64 aa).

4Fe-4S ferredoxin-type domains are found at residues 3–31 and 34–64; these read KYLYLDQDECMACESCVELCPEAFRMSSA and YAEVIDPNTTAECVEDAISTCPVECIEWREE. Residues C12, C15, C18, and C54 each contribute to the [4Fe-4S] cluster site.

As to quaternary structure, homodimer. [4Fe-4S] cluster is required as a cofactor.

Functionally, ferredoxins are iron-sulfur proteins that transfer electrons in a wide variety of metabolic reactions. The sequence is that of Ferredoxin-2 from Nitratidesulfovibrio vulgaris (strain DSM 19637 / Miyazaki F) (Desulfovibrio vulgaris).